Reading from the N-terminus, the 203-residue chain is Glutathione-specific gamma-glutamylcyclotransferase (203 aa).

Valine 12–serine 17 serves as a coordination point for substrate. Residue glutamate 105 is the Proton acceptor of the active site.

This sequence belongs to the gamma-glutamylcyclotransferase family. ChaC subfamily.

The protein resides in the cytoplasm. The protein localises to the nucleus. The enzyme catalyses glutathione = L-cysteinylglycine + 5-oxo-L-proline. Its function is as follows. Gamma-glutamylcyclotransferase acting specifically on glutathione, but not on other gamma-glutamyl peptides. Allows utilization of gluthathione through subsequent cleavage of the Cys-Gly dipeptide by Cys-Gly metallodipeptidase dug1. This is Glutathione-specific gamma-glutamylcyclotransferase from Schizosaccharomyces pombe (strain 972 / ATCC 24843) (Fission yeast).